The primary structure comprises 1541 residues: MHHHHPPLPITGASGSTAVGTGAAAAEDASPAANSGPAPISTSTTPSGSNSQQHQRRRKKRANYNYNGIRTVEVRRGYNGFGFTISGQQPCRLSCIISSSPAEQAGLRSGDFLISVNGLNVSKLPHETVVQLIGNSFGSIRMQIAENYYSDSSDEENAHATLRGQLLAASLRHKPRFLHHKAKLHRLRNSPQKKLNPPEAVEPHKSKSSPDHPTLKPVLEDPPLTANLSKAADVANVSAMVRAVGSAALECRVIVGYLGTIEMPKQISHSSKLQTVRSCIRKLRQEKRQPTIVLMCITPDSLSLQSSSGGVLATYSSARLNFVSSSSESENRFFGLVTSAVHNTQIEEEYEPSAGSAAAAGHISISHSCHVFVIDTKLIEHAQHLQRAHEFRLQCTRDPISNLCLEFPNNSEYVVNLVRSMYTMRILPPASRSHQADYEAGAGAAAAGGAVAAAHSPQPSNHSEISTTTSNSDSGIGFNNDCTNISDRILVVDFLAAGAGAAAAAHAGPPTYPAPARPLGIVGIPDNRLTVRAMPDHSALLRSPPASSSLRRPNLLASFNLIQSPATNLTSTRSCDDVLNLFVDDSPRTLAAVASMDDISLHSAAPSLDEGHTFAHPACVPRKMRRSLALETPTTPHKLSAQVFGQPGSRHSLGFEAIDSVQSSVSGACMDQTMDTWASLQNLHKSHKDRTSMSASSSSHCLLEATNSEPDLGNRALPANASPFRRAWGQSSFRTPRSDKVAKEQQQLGQSSPVRRTASMNASDNDMYIKTLMLDSDLKSSRSQHQLSLLQVPKVLTTPAPPSAITASVAAEGAAQDHGCPSSWAGSFERMLQDAAGMQTFSEFLKKEFSAENIYFWTACERYRLLESEADRVAQAREIFAKHLANNSSDPVNVDSQARSLTEEKLADAAPDIFAPAQKQIFSLMKFDSYQRFIRSDLYKSCVEAEQKNQPLPYSGLDLDELLKTNFHLGAFSKLKKSASNAEDRRRKSLLPWHRKTRSKSRDRTEIMADMQHALMPAPPVPQNAPLTSASLKLVCGQNSLSDLHSSRSSLSSFDAGTATGGQGASTESVYSLCRVILTDGATTIVQTRPGETVGELVERLLEKRNLVYPYYDIVFQGSTKSIDVQQPSQILAGKEVVIERRVAFKLDLPDPKVISVKSKPKKQLHEVIRPILSKYNYKMEQVQVIMRDTQVPIDLNQPVTMADGQRLRIVMVNSDFQVGGGSSMPPKQSKPMKPLPQGHLDELTNKVFNELLASKADAAASEKSRPVDLCSMKSNEAPSETSSLFERMRRQQRDGGNIPASKLPKLKKKSTSSSQQSEEAATTQAVADPKKPIIAKLKAGVKLQVTERVAEHQDELLEGLKRAQLARLEDQRGTEINFDLPDFLKNKENLSAAVSKLRKVRASLSPVSKVPATPTEIPQPAPRLSITRSQQPVSPMKVDQEPETDLPAATQDQTEFAKAPPPLPPKPKVLPIKPSNWGVAQPTGNYCNKYSPSKQVPTSPKEASKPGTFASKIPLDLGRKSLEEAGSRCAYLDEPSSSFV.

Residues 1-66 (MHHHHPPLPI…RRKKRANYNY (66 aa)) are disordered. Residues 11–36 (TGASGSTAVGTGAAAAEDASPAANSG) are compositionally biased toward low complexity. The segment covering 40–53 (ISTSTTPSGSNSQQ) has biased composition (polar residues). In terms of domain architecture, PDZ spans 71 to 148 (TVEVRRGYNG…SIRMQIAENY (78 aa)). The tract at residues 182–222 (AKLHRLRNSPQKKLNPPEAVEPHKSKSSPDHPTLKPVLEDP) is disordered. The span at 201–214 (VEPHKSKSSPDHPT) shows a compositional bias: basic and acidic residues. The region spanning 247–423 (AALECRVIVG…VVNLVRSMYT (177 aa)) is the PID domain. 2 disordered regions span residues 449–473 (GAVAAAHSPQPSNHSEISTTTSNSD) and 708–761 (SEPD…ASMN). Polar residues-rich tracts occupy residues 457–473 (PQPSNHSEISTTTSNSD) and 744–761 (EQQQLGQSSPVRRTASMN). The region spanning 827–943 (SFERMLQDAA…IRSDLYKSCV (117 aa)) is the RGS domain. Residues 978–1004 (SASNAEDRRRKSLLPWHRKTRSKSRDR) are disordered. A compositionally biased stretch (basic residues) spans 987–999 (RKSLLPWHRKTRS). RBD domains follow at residues 1072–1142 (SLCR…IERR) and 1143–1213 (VAFK…IVMV). The segment at 1258-1327 (DAAASEKSRP…SEEAATTQAV (70 aa)) is disordered. Over residues 1273 to 1285 (MKSNEAPSETSSL) the composition is skewed to polar residues. The span at 1312 to 1325 (TSSSQQSEEAATTQ) shows a compositional bias: low complexity. In terms of domain architecture, GoLoco spans 1354–1376 (QDELLEGLKRAQLARLEDQRGTE). The interval 1410–1513 (KVPATPTEIP…ASKPGTFASK (104 aa)) is disordered. Pro residues predominate over residues 1460 to 1469 (APPPLPPKPK). The segment covering 1483–1499 (PTGNYCNKYSPSKQVPT) has biased composition (polar residues).

Interacts (via GoLoco and RGS domains) with Galphai (via GDP- or GTP-bound forms). In terms of tissue distribution, expressed in surface and longitudinal glial cells, gut and heart (at protein level).

The protein resides in the cytoplasm. Its subcellular location is the cell membrane. It is found in the apical cell membrane. In terms of biological role, acts as a regulator of G protein signaling (RGS). Modulates G protein alpha subunits nucleotide exchange and hydrolysis activities by functioning either as a GTPase-activating protein (GAP), thereby driving G protein alpha subunits into their inactive GDP-bound form, or as a GDP-dissociation inhibitor (GDI). Confers GDI and GAP activities on G(i) alpha subunit Galphai. Confers GAP activity on G(o)-alpha subunit Galphao and G(i) alpha subunit Galphai. Involved in the dorsal-ventral axis formation of the egg. Acts as a G-protein signaling for glial cell differentiation during embryogenesis; Galphai, Galphao and the G-protein coupled receptor, moody, are required in the surface glia to achieve effective insulation of the nerve cord. May be essential for nurse cell dumping during oogenesis. Required in neuroblast asymmetrical cell division. Plays a role in stress resistance and life span control. This Drosophila melanogaster (Fruit fly) protein is Regulator of G-protein signaling loco (loco).